The following is a 296-amino-acid chain: Ribosomal protein L11 methyltransferase (296 aa).

4 residues coordinate S-adenosyl-L-methionine: threonine 139, glycine 163, aspartate 185, and asparagine 232.

It belongs to the methyltransferase superfamily. PrmA family.

The protein localises to the cytoplasm. It catalyses the reaction L-lysyl-[protein] + 3 S-adenosyl-L-methionine = N(6),N(6),N(6)-trimethyl-L-lysyl-[protein] + 3 S-adenosyl-L-homocysteine + 3 H(+). Its function is as follows. Methylates ribosomal protein L11. This chain is Ribosomal protein L11 methyltransferase, found in Rippkaea orientalis (strain PCC 8801 / RF-1) (Cyanothece sp. (strain PCC 8801)).